The chain runs to 205 residues: Thymidylate kinase (205 aa).

9–16 (GPEGSGKT) serves as a coordination point for ATP.

Belongs to the thymidylate kinase family.

It catalyses the reaction dTMP + ATP = dTDP + ADP. Phosphorylation of dTMP to form dTDP in both de novo and salvage pathways of dTTP synthesis. The polypeptide is Thymidylate kinase (Staphylococcus aureus (strain MSSA476)).